The sequence spans 259 residues: Cobalt transport protein CbiM (259 aa).

Residues 1–25 (MFRRTTWLTLYLLLAMAALARPAFA) form the signal peptide. The next 6 membrane-spanning stretches (helical) occupy residues 31–51 (GFLP…FWIW), 68–88 (MLLG…LPSV), 100–120 (LGAV…VLLF), 132–152 (TLGA…YGLY), 160–180 (GSMP…TYVT), and 206–226 (IFAV…VIVF).

Belongs to the CbiM family. Forms an energy-coupling factor (ECF) transporter complex composed of an ATP-binding protein (A component, CbiO), a transmembrane protein (T component, CbiQ) and 2 possible substrate-capture proteins (S components, CbiM and CbiN) of unknown stoichimetry.

The protein resides in the cell membrane. It functions in the pathway cofactor biosynthesis; adenosylcobalamin biosynthesis. Functionally, part of the energy-coupling factor (ECF) transporter complex CbiMNOQ involved in cobalt import. This chain is Cobalt transport protein CbiM, found in Moorella thermoacetica (strain ATCC 39073 / JCM 9320).